Consider the following 356-residue polypeptide: tRNA N6-adenosine threonylcarbamoyltransferase (356 aa).

2 residues coordinate Fe cation: His-115 and His-119. Substrate-binding positions include 138–142 (LVSGG), Asp-171, Gly-184, and Asn-283. Asp-311 contacts Fe cation.

This sequence belongs to the KAE1 / TsaD family. Requires Fe(2+) as cofactor.

It is found in the cytoplasm. The enzyme catalyses L-threonylcarbamoyladenylate + adenosine(37) in tRNA = N(6)-L-threonylcarbamoyladenosine(37) in tRNA + AMP + H(+). Required for the formation of a threonylcarbamoyl group on adenosine at position 37 (t(6)A37) in tRNAs that read codons beginning with adenine. Is involved in the transfer of the threonylcarbamoyl moiety of threonylcarbamoyl-AMP (TC-AMP) to the N6 group of A37, together with TsaE and TsaB. TsaD likely plays a direct catalytic role in this reaction. This is tRNA N6-adenosine threonylcarbamoyltransferase from Prochlorococcus marinus (strain MIT 9301).